An 87-amino-acid chain; its full sequence is Large ribosomal subunit protein bL31B (87 aa).

The protein belongs to the bacterial ribosomal protein bL31 family. Type B subfamily. In terms of assembly, part of the 50S ribosomal subunit.

The protein is Large ribosomal subunit protein bL31B of Corynebacterium kroppenstedtii (strain DSM 44385 / JCM 11950 / CIP 105744 / CCUG 35717).